The sequence spans 1162 residues: Protein OBERON 4 (1162 aa).

Basic and acidic residues-rich tracts occupy residues 1-19, 61-77, 90-99, and 118-134; these read MKRL…KNVD, NRDL…HRSE, FRSERERPNR, and VDDR…DRSL. Disordered stretches follow at residues 1-235, 251-307, 321-346, and 441-485; these read MKRL…PSCS, IGKS…VSQN, DHRD…DKDE, and SKTE…QSGV. Residues 135 to 146 show a composition bias toward polar residues; it reads KSPSWSRDSPNE. A compositionally biased stretch (basic and acidic residues) spans 148–157; it reads SKFKPLDSRN. Over residues 163–182 the composition is skewed to polar residues; sequence KSLASPTWSKDSGSEQSKSV. A compositionally biased stretch (acidic residues) spans 203–213; it reads EMEEGELEPEP. Basic and acidic residues-rich tracts occupy residues 225-235, 263-300, 336-346, and 441-457; these read TKHDCKLPSCS, SNRE…HATE, DTVDEKGDKDE, and SKTE…KDDN. The segment at 835-899 adopts a PHD-type zinc-finger fold; that stretch reads ACMCLVCSNF…QFHCVACNHP (65 aa). Positions 1065–1161 form a coiled coil; it reads MKQAEAEMFQ…KMEMTKQSLA (97 aa).

Self-interacts. Interacts with OBE1 and OBE2. Interacts with OBE3.

It is found in the nucleus. Its function is as follows. Probable transcription factor that functions redundantly with OBE3 in specification of the hypophysis and establishment of the embryonic root. Involved in the activation of ARF5/MP-dependent gene expression during embryonic root meristem initiation. Involved in shoot meristem homeostasis. This chain is Protein OBERON 4, found in Arabidopsis thaliana (Mouse-ear cress).